Consider the following 89-residue polypeptide: Large ribosomal subunit protein uL29 (89 aa).

It belongs to the universal ribosomal protein uL29 family.

This is Large ribosomal subunit protein uL29 from Frankia alni (strain DSM 45986 / CECT 9034 / ACN14a).